We begin with the raw amino-acid sequence, 202 residues long: Transcription factor IBH1 (202 aa).

A compositionally biased stretch (pro residues) spans 1-16 (MDAKRTPPPPTPPNPN). Residues 1–33 (MDAKRTPPPPTPPNPNPSVIGSGAAADGGGFGR) are disordered. The bHLH domain maps to 136–185 (TSAAARAVPPPPRQQGEPPRAEALRRLVPGGAGMEYSSLLEETADYLRSL).

The protein belongs to the bHLH protein family. In terms of assembly, interacts with ILI1. Binds to ILI5/BUL1 and BC1. Interacts with BCL1 and BCL2. As to expression, highly expressed in roots and at lower levels in leaf blades, leaf sheaths, lamina joint, stems and panicles.

In terms of biological role, atypical and probable non DNA-binding bHLH transcription factor that acts as a negative regulator of cell elongation and plant development. Binds the transcription factor ILI1 and forms a heterodimer of antagonistic bHLH transcription factors that function downstream of BZR1 to mediate brassinosteroid regulation of cell elongation and lamina inclination. The sequence is that of Transcription factor IBH1 from Oryza sativa subsp. japonica (Rice).